A 510-amino-acid chain; its full sequence is Major facilitator superfamily domain-containing protein 4A (510 aa).

12 helical membrane passes run 19 to 39 (LTYWSVFFSFGLCIAFLGPTL), 53 to 73 (ISWVFFSQQLCLLLGSALGGV), 82 to 102 (LWALFTSTLVISLVFAVIPFC), 107 to 127 (VLASVIALAGLAMGCIDTVAN), 139 to 159 (AFFLQVLHFFVGLGALLSPLI), 218 to 238 (YAFWIMALINLPVPLAVLFLL), 303 to 323 (FFAIHITAALVLFMTDGMMGA), 345 to 365 (GYLPSLFWGFITLGRFISIPV), 380 to 400 (VGVVVTFLMLLIFSYNVIFLF), 401 to 421 (VGTASLGLFLSSTFPSMLAYT), 434 to 454 (VLVTGAGIGEMVLQMLVGLIF), and 462 to 482 (FLVCGVIFGCLAFIFYILLLF).

This sequence belongs to the major facilitator superfamily.

Its subcellular location is the membrane. The protein is Major facilitator superfamily domain-containing protein 4A of Mus musculus (Mouse).